Here is a 515-residue protein sequence, read N- to C-terminus: Cytoplasmic dynein 1 light intermediate chain 1 (515 aa).

The span at 1-24 (MAAVGRAGSFGSSSASGAANNASA) shows a compositional bias: low complexity. The interval 1-34 (MAAVGRAGSFGSSSASGAANNASAELRAGGEEDD) is disordered. 64–71 (GEDGAGKT) serves as a coordination point for ATP. Disordered stretches follow at residues 370 to 424 (QSQL…DPNM) and 445 to 515 (KTGS…GEAS). The segment covering 397 to 409 (RTPNRSVTSNVAS) has biased composition (polar residues). A compositionally biased stretch (gly residues) spans 448 to 468 (SPGGPGGVGGSPGGGSAGGTG). Residues 490–499 (ELDRISRKPE) show a composition bias toward basic and acidic residues. Positions 502 to 515 (SPTSPTSPTEGEAS) are enriched in polar residues.

Belongs to the dynein light intermediate chain family. In terms of assembly, homodimer. The cytoplasmic dynein 1 complex consists of two catalytic heavy chains (HCs) and a number of non-catalytic subunits presented by intermediate chains (ICs). Phosphorylated.

The protein localises to the cytoplasm. It is found in the cytoskeleton. The protein resides in the chromosome. It localises to the centromere. Its subcellular location is the kinetochore. The protein localises to the spindle pole. It is found in the recycling endosome membrane. In terms of biological role, acts as one of several non-catalytic accessory components of the cytoplasmic dynein 1 complex that are thought to be involved in linking dynein to cargos and to adapter proteins that regulate dynein function. Cytoplasmic dynein 1 acts as a motor for the intracellular retrograde motility of vesicles and organelles along microtubules. May play a role in binding dynein to membranous organelles or chromosomes. May regulate the movement of peripheral sorting endosomes along microtubule tracks toward the microtubule organizing center/centrosome, generating the endosomal recycling compartment. The sequence is that of Cytoplasmic dynein 1 light intermediate chain 1 (DYNC1LI1) from Gallus gallus (Chicken).